The following is a 448-amino-acid chain: uncharacterized protein (448 aa).

Residues 187–198 (SKGDRGDADDRG) are compositionally biased toward basic and acidic residues. Disordered stretches follow at residues 187 to 221 (SKGD…LPTR), 243 to 270 (LQVP…GATM), and 291 to 361 (LSGL…LPNG). Low complexity predominate over residues 243 to 261 (LQVPGGTSAAIPSASSTPS). Basic and acidic residues predominate over residues 307-334 (FDERGQEVRDPADYEHSNEPDERRADDR).

The protein to M.tuberculosis Rv0025 and Rv0739.

This is an uncharacterized protein from Mycobacterium tuberculosis (strain ATCC 25618 / H37Rv).